The primary structure comprises 149 residues: Calmodulin (149 aa).

Residue Thr-2 is modified to N-acetylthreonine. EF-hand domains lie at 8 to 43 (EQIA…LGQN), 44 to 79 (PTEA…KMKE), 81 to 116 (DSEE…LGEK), and 117 to 149 (LTDE…MTSK). Ca(2+)-binding residues include Asp-21, Asp-23, Asp-25, Thr-27, Glu-32, Asp-57, Asp-59, Asn-61, Thr-63, Glu-68, Asp-94, Asp-96, Asn-98, and Glu-105. N6,N6,N6-trimethyllysine is present on Lys-116. Asp-130, Asp-132, Asp-134, Gln-136, and Glu-141 together coordinate Ca(2+).

It belongs to the calmodulin family.

In terms of biological role, calmodulin mediates the control of a large number of enzymes, ion channels and other proteins by Ca(2+). Among the enzymes to be stimulated by the calmodulin-Ca(2+) complex are a number of protein kinases and phosphatases. This is Calmodulin from Halichondria okadai (Marine sponge).